The chain runs to 271 residues: Formamidopyrimidine-DNA glycosylase (271 aa).

The Schiff-base intermediate with DNA role is filled by Pro-2. Residue Glu-3 is the Proton donor of the active site. The active-site Proton donor; for beta-elimination activity is Lys-57. 3 residues coordinate DNA: His-90, Arg-109, and Lys-151. The FPG-type zinc-finger motif lies at 236 to 270 (HVYGRGGETCTQCGNLLSEIRLGQRTTVFCGICQT). Arg-260 (proton donor; for delta-elimination activity) is an active-site residue.

This sequence belongs to the FPG family. In terms of assembly, monomer. Requires Zn(2+) as cofactor.

It carries out the reaction Hydrolysis of DNA containing ring-opened 7-methylguanine residues, releasing 2,6-diamino-4-hydroxy-5-(N-methyl)formamidopyrimidine.. The enzyme catalyses 2'-deoxyribonucleotide-(2'-deoxyribose 5'-phosphate)-2'-deoxyribonucleotide-DNA = a 3'-end 2'-deoxyribonucleotide-(2,3-dehydro-2,3-deoxyribose 5'-phosphate)-DNA + a 5'-end 5'-phospho-2'-deoxyribonucleoside-DNA + H(+). Functionally, involved in base excision repair of DNA damaged by oxidation or by mutagenic agents. Acts as a DNA glycosylase that recognizes and removes damaged bases. Has a preference for oxidized purines, such as 7,8-dihydro-8-oxoguanine (8-oxoG). Has AP (apurinic/apyrimidinic) lyase activity and introduces nicks in the DNA strand. Cleaves the DNA backbone by beta-delta elimination to generate a single-strand break at the site of the removed base with both 3'- and 5'-phosphates. This is Formamidopyrimidine-DNA glycosylase from Shewanella sp. (strain MR-4).